The primary structure comprises 102 residues: Large ribosomal subunit protein uL24 (102 aa).

The protein belongs to the universal ribosomal protein uL24 family. Part of the 50S ribosomal subunit.

One of two assembly initiator proteins, it binds directly to the 5'-end of the 23S rRNA, where it nucleates assembly of the 50S subunit. Functionally, one of the proteins that surrounds the polypeptide exit tunnel on the outside of the subunit. The chain is Large ribosomal subunit protein uL24 from Rhizobium rhizogenes (strain K84 / ATCC BAA-868) (Agrobacterium radiobacter).